Here is a 250-residue protein sequence, read N- to C-terminus: Acidic endochitinase (250 aa).

Residue glutamine 1 is modified to Pyrrolidone carboxylic acid. In terms of domain architecture, Chitin-binding type-1 spans 1–36 (QNCQCDTTIYCCSQHGYCGNSYDYCGPGCQAGPCWD). 7 disulfides stabilise this stretch: cysteine 3/cysteine 12, cysteine 5/cysteine 18, cysteine 11/cysteine 25, cysteine 29/cysteine 34, cysteine 66/cysteine 115, cysteine 128/cysteine 136, and cysteine 218/cysteine 250. Residue glutamate 110 is the Proton donor of the active site.

Belongs to the glycosyl hydrolase 19 family. Chitinase class I subfamily.

It catalyses the reaction Random endo-hydrolysis of N-acetyl-beta-D-glucosaminide (1-&gt;4)-beta-linkages in chitin and chitodextrins.. Defense against chitin-containing fungal pathogens. This Dioscorea japonica (Japanese yam) protein is Acidic endochitinase.